The primary structure comprises 425 residues: bZIP transcription factor RISBZ2 (425 aa).

Disordered stretches follow at residues 1–50 (MERV…GGGG) and 169–257 (NSIG…AAHL). Residues 30–50 (QGGGGVASGGGGGVAGGGGGG) show a composition bias toward gly residues. Residues 171–182 (IGGNATPVQNML) are compositionally biased toward polar residues. Residues 213 to 222 (SDDDDMEGEA) show a composition bias toward acidic residues. Residues 231–247 (ADQRLQRRKQSNRESAR) show a composition bias toward basic and acidic residues. The bZIP domain occupies 232–295 (DQRLQRRKQS…NDAAVDNRVL (64 aa)). A basic motif region spans residues 234–253 (RLQRRKQSNRESARRSRSRK). The tract at residues 260 to 274 (LEAQVSQLRVENSSL) is leucine-zipper. The segment at 334–354 (MPFNSSPSEATSDAAVPIQDD) is disordered.

In terms of assembly, heterodimer with RISBZ1/BZIP58.

It is found in the nucleus. Transcriptional activator that binds to the DNA specific sequence 5'-GCCACGT[AC]AG-3' found in the alpha-globulin gene promoter. Does not bind to promoters of other major storage genes such as glutelin, prolamin and albumin. Binds to the DNA specific sequence 5'-TGAGTCA-3' found in seed storage protein gene promoters. In Oryza sativa subsp. japonica (Rice), this protein is bZIP transcription factor RISBZ2.